We begin with the raw amino-acid sequence, 582 residues long: Protein NUCLEAR FUSION DEFECTIVE 4 (582 aa).

Positions 1–20 (MRPRIRDVSDKLRPNRASFD) are disordered. 8 helical membrane passes run 46-66 (VLVA…FSAY), 100-120 (IALG…MGFV), 132-152 (IITL…LSIC), 172-192 (LALS…SLAF), 202-222 (LYLL…LYPV), 243-263 (VFTI…LSSS), 270-290 (LNFI…LLVY), and 358-378 (LEFW…LVYS). Asparagine 391 carries an N-linked (GlcNAc...) asparagine glycan. The next 5 helical transmembrane spans lie at 395–412 (LVTI…LSAA), 425–445 (TGWF…LAVS), 458–478 (LIGL…SDLF), 489–509 (ILIT…ASIY), and 536–556 (TFVF…SLYI).

It localises to the membrane. Required for karyogamy during female gametophyte development, when the two polar nuclei fuse to form the diploid central cell nucleus. This Arabidopsis thaliana (Mouse-ear cress) protein is Protein NUCLEAR FUSION DEFECTIVE 4.